The sequence spans 1050 residues: Sentrin-specific protease 7 (1050 aa).

Disordered stretches follow at residues 1–28 (MDKR…SSDL), 183–288 (PPVT…DVKY), and 304–365 (RRLR…KSDF). S11, S12, S13, and S25 each carry phosphoserine. Positions 196–211 (LQSEQLSSSSDGSLES) are enriched in low complexity. Residues 259–271 (ISDTQPEDLNSGS) are compositionally biased toward polar residues. Positions 273–288 (GCDHLEQESRNKDVKY) are enriched in basic and acidic residues. Positions 310 to 320 (LPDSQYCTSLD) are enriched in polar residues. 2 stretches are compositionally biased toward basic and acidic residues: residues 321–331 (KSTEQTKKQED) and 338–365 (EFEK…KSDF). Phosphoserine is present on residues S373, S433, S443, and S444. Positions 443 to 476 (SSDEEGPVEHKSSEILKLQSKQDRETTNENESTS) are disordered. Residues 449 to 469 (PVEHKSSEILKLQSKQDRETT) show a composition bias toward basic and acidic residues. Residues 760-1050 (LGVTNEDLEC…HLQQQKGSSS (291 aa)) form a protease region. Residues H860 and D939 contribute to the active site. C992 functions as the Nucleophile in the catalytic mechanism.

It belongs to the peptidase C48 family.

The protein resides in the cytoplasm. In terms of biological role, protease that acts as a positive regulator of the cGAS-STING pathway by catalyzing desumoylation of CGAS. Desumoylation of CGAS promotes DNA-binding activity of CGAS, subsequent oligomerization and activation. Deconjugates SUMO2 and SUMO3 from targeted proteins, but not SUMO1. Catalyzes the deconjugation of poly-SUMO2 and poly-SUMO3 chains. Has very low efficiency in processing full-length SUMO proteins to their mature forms. This is Sentrin-specific protease 7 from Homo sapiens (Human).